The sequence spans 410 residues: Serine/threonine transporter SstT (410 aa).

The next 10 helical transmembrane spans lie at 15 to 35, 49 to 69, 82 to 102, 118 to 138, 142 to 162, 190 to 210, 217 to 237, 299 to 319, 331 to 351, and 358 to 378; these read GSLV…AWLS, FVNA…ISSI, PIVM…VVAS, IVPP…MVTN, AVMK…GFAF, FAPV…GFDA, LLGL…PLLV, MAGA…TLGI, LVAS…LLLI, and FGIP…IGVL.

Belongs to the dicarboxylate/amino acid:cation symporter (DAACS) (TC 2.A.23) family.

It is found in the cell inner membrane. The enzyme catalyses L-serine(in) + Na(+)(in) = L-serine(out) + Na(+)(out). The catalysed reaction is L-threonine(in) + Na(+)(in) = L-threonine(out) + Na(+)(out). In terms of biological role, involved in the import of serine and threonine into the cell, with the concomitant import of sodium (symport system). The sequence is that of Serine/threonine transporter SstT from Erwinia tasmaniensis (strain DSM 17950 / CFBP 7177 / CIP 109463 / NCPPB 4357 / Et1/99).